Consider the following 101-residue polypeptide: Vacuolar ATPase assembly integral membrane protein VMA21 (101 aa).

Over 1 to 25 the chain is Cytoplasmic; that stretch reads MERLDKAALNALQPSDFRNESSLAS. A helical membrane pass occupies residues 26-46; the sequence is TLKTLLFFTALMITVPIGLYF. At 47–65 the chain is on the lumenal side; the sequence is TTKSYVFEGAFGMSNRDSY. Residues 66–86 traverse the membrane as a helical segment; it reads FYAAIVAVVAVHVVLALFVYV. The Cytoplasmic portion of the chain corresponds to 87–101; it reads AWNEGSRQWREGKQD.

It belongs to the VMA21 family. Associates with the V0 complex of the vacuolar ATPase (V-ATPase). Interacts with ATP6AP2.

The protein localises to the endoplasmic reticulum membrane. It is found in the endoplasmic reticulum-Golgi intermediate compartment membrane. The protein resides in the cytoplasmic vesicle. Its subcellular location is the COPII-coated vesicle membrane. Its function is as follows. Required for the assembly of the V0 complex of the vacuolar ATPase (V-ATPase) in the endoplasmic reticulum. This chain is Vacuolar ATPase assembly integral membrane protein VMA21, found in Bos taurus (Bovine).